Reading from the N-terminus, the 238-residue chain is MGRKWANIVAKKTAKDGATSKVYAKFGVEIYAAAKQGEPDPESNSALKFVIERAKQAQVPKHVIDKAIDKAKGGGDETFVQGRYEGFGPNGSMVIAETLTSNVNRTIANIRTIFNKKGGNIGAAGAVSYMFDNTGVIVFKGTDPDHIFEILLDAEVDVRDVTEEEGNIVIYTEATDLHKGIAALKAAGITEFSTTELEMIAQSEVELSPEDLEIFEGLVDALEDDDDVQKVYHNVANL.

The protein belongs to the TACO1 family. YeeN subfamily.

Its subcellular location is the cytoplasm. The sequence is that of Probable transcriptional regulatory protein YeeN from Salmonella choleraesuis (strain SC-B67).